Consider the following 360-residue polypeptide: Probable neutral protease 2 homolog MCYG_04257 (360 aa).

Positions Met-1–Ala-17 are cleaved as a signal peptide. Positions Ala-18–Arg-182 are excised as a propeptide. Cysteines 190 and 261 form a disulfide. Asn-262 is a glycosylation site (N-linked (GlcNAc...) asparagine). 2 disulfide bridges follow: Cys-268–Cys-286 and Cys-300–Cys-360. His-311 serves as a coordination point for Zn(2+). Glu-312 is an active-site residue. Positions 315 and 326 each coordinate Zn(2+).

It belongs to the peptidase M35 family. The cofactor is Zn(2+).

It is found in the secreted. The enzyme catalyses Preferential cleavage of bonds with hydrophobic residues in P1'. Also 3-Asn-|-Gln-4 and 8-Gly-|-Ser-9 bonds in insulin B chain.. Functionally, probable secreted metalloprotease that shows high activities on basic nuclear substrates such as histone and protamine. May be involved in virulence. This Arthroderma otae (strain ATCC MYA-4605 / CBS 113480) (Microsporum canis) protein is Probable neutral protease 2 homolog MCYG_04257.